Reading from the N-terminus, the 729-residue chain is Fatty acid oxidation complex subunit alpha (729 aa).

The interval 1–189 (MLYKGDTLYL…KIGLVDGVVK (189 aa)) is enoyl-CoA hydratase/isomerase. D296 contributes to the substrate binding site. Positions 311-729 (ETPKQAAVLG…ARPVGDLKTA (419 aa)) are 3-hydroxyacyl-CoA dehydrogenase. NAD(+) contacts are provided by residues M324, D343, 400 to 402 (VVE), K407, and S429. H450 (for 3-hydroxyacyl-CoA dehydrogenase activity) is an active-site residue. N453 is an NAD(+) binding site. 2 residues coordinate substrate: N500 and Y660. The interval 708-729 (RHNEPYYPPVEPARPVGDLKTA) is disordered.

This sequence in the N-terminal section; belongs to the enoyl-CoA hydratase/isomerase family. It in the C-terminal section; belongs to the 3-hydroxyacyl-CoA dehydrogenase family. Heterotetramer of two alpha chains (FadB) and two beta chains (FadA).

The catalysed reaction is a (3S)-3-hydroxyacyl-CoA + NAD(+) = a 3-oxoacyl-CoA + NADH + H(+). It carries out the reaction a (3S)-3-hydroxyacyl-CoA = a (2E)-enoyl-CoA + H2O. It catalyses the reaction a 4-saturated-(3S)-3-hydroxyacyl-CoA = a (3E)-enoyl-CoA + H2O. The enzyme catalyses (3S)-3-hydroxybutanoyl-CoA = (3R)-3-hydroxybutanoyl-CoA. The catalysed reaction is a (3Z)-enoyl-CoA = a 4-saturated (2E)-enoyl-CoA. It carries out the reaction a (3E)-enoyl-CoA = a 4-saturated (2E)-enoyl-CoA. The protein operates within lipid metabolism; fatty acid beta-oxidation. Involved in the aerobic and anaerobic degradation of long-chain fatty acids via beta-oxidation cycle. Catalyzes the formation of 3-oxoacyl-CoA from enoyl-CoA via L-3-hydroxyacyl-CoA. It can also use D-3-hydroxyacyl-CoA and cis-3-enoyl-CoA as substrate. The polypeptide is Fatty acid oxidation complex subunit alpha (Shigella flexneri serotype 5b (strain 8401)).